A 235-amino-acid polypeptide reads, in one-letter code: MKFEPELESGKLIKRYKRFLADIKLDDNSERTIHCANTGAMTGCAEPDSTVFFSTSSNLKRKYPNSWELSVTENNHTICVNTLRSNQLVVEAIQDQNIKELTEYDELKTEVKYGSENSRIDILLTGKSLPDCYIEVKSVTLLSESGQGFFPDAVTTRGQKHLRELSEMAQLGHKAILFFAVLHSGIEKVSIAHHIDQQYHSLLIDAIENGVNILCYQAEMSSKEMKIVRKLPFSI.

This sequence belongs to the SfsA family.

The polypeptide is Sugar fermentation stimulation protein homolog (Aliivibrio fischeri (strain ATCC 700601 / ES114) (Vibrio fischeri)).